The chain runs to 118 residues: Vitelline coat lysin (118 aa).

This chain is Vitelline coat lysin, found in Tegula pfeifferi (Pfeiffer's top shell).